Reading from the N-terminus, the 333-residue chain is Phosphate acyltransferase (333 aa).

This sequence belongs to the PlsX family. Homodimer. Probably interacts with PlsY.

The protein localises to the cytoplasm. The enzyme catalyses a fatty acyl-[ACP] + phosphate = an acyl phosphate + holo-[ACP]. The protein operates within lipid metabolism; phospholipid metabolism. Functionally, catalyzes the reversible formation of acyl-phosphate (acyl-PO(4)) from acyl-[acyl-carrier-protein] (acyl-ACP). This enzyme utilizes acyl-ACP as fatty acyl donor, but not acyl-CoA. The sequence is that of Phosphate acyltransferase from Desulforamulus reducens (strain ATCC BAA-1160 / DSM 100696 / MI-1) (Desulfotomaculum reducens).